An 861-amino-acid polypeptide reads, in one-letter code: MAGPGPGAALESPRQLLGRVRFLAEAARSLRAGLPLPAALAFVPREVLYKLYKDPAGPSRVLLPVWEAEGLGLRVGAVGAAPGTGSGPLRAARDSIELRRGACVRTTGEELCNGHGLWVKLTKEQLAEHLSDCSLDEGWLLVCRPAEGGARLVPIDTPDHLQRQQQLFGVDYRPVLRWEQVVDLTYSHRLGSRPQPAEAYTEAIQRLLYVPPTWTYECDEDLIHFLYDHLGKEDENLGSVKQYVESIDVSSYTEEFNVSCLTDSNADTYWESDGSQCQHWVRLTMKKGTIVKKLLLTVDTTDDNFMPKRVVVYGGEGDNLKKLSDVNIDETLIGDVCVLEDMTVHLPIIEIRIVECRDDGIDVRLRGVKIKSSRQRELGLNADLFQPASLVRYPRLEGTDPEVLYRRAVLLQRFIKILDSVLHHLVPAWDHTLGTFSEIKQVKQFLLLSRQRPSLVAQCLRDSESSKPSFMPRLYINRRLAMEHRACPSRDPACKNAVFTQVYEGLKPSDKYEKPLDYRWPMRYDQWWECKFIAEGIIDQGGGFRDSLADMSEELCPSSADTPVPLPFFVRTANQGNGTGEARDMYVPNPSCRDFAKYEWIGQLMGAALRGKEFLVLALPGFVWKQLSGEEVSWSKDFPAVDSVLVKLLEVMEGVDKETFEFKFGKELTFTTVLSDQQVVELIPGGTGIVVEYEDRSRFIQLVRKARLEESKEQVAAMQAGLLKVVPQAVLDLLTWQELEKKVCGDPEVTVDALRKLTRFEDFEPSDTRVQYFWEALNNFTNEDRSRFLRFVTGRSRLPARIYIYPDKLGYETTDALPESSTCSSTLFLPHYASAKVCEEKLRYAAYNCVAIDTDMSPWEE.

Alanine 2 is subject to N-acetylalanine. Serine 12 bears the Phosphoserine mark. One can recognise a DOC domain in the interval aspartate 219–glutamate 397. One can recognise an HECT domain in the interval tyrosine 512 to serine 857. Residue cysteine 823 is the Glycyl thioester intermediate of the active site.

Interacts with TRIOBP. Interacts with STX8.

It localises to the cytoplasm. Its subcellular location is the perinuclear region. The enzyme catalyses S-ubiquitinyl-[E2 ubiquitin-conjugating enzyme]-L-cysteine + [acceptor protein]-L-lysine = [E2 ubiquitin-conjugating enzyme]-L-cysteine + N(6)-ubiquitinyl-[acceptor protein]-L-lysine.. The protein operates within protein modification; protein ubiquitination. In terms of biological role, E3 ubiquitin ligases accepts ubiquitin from an E2 ubiquitin-conjugating enzyme in the form of a thioester and then directly transfers the ubiquitin to targeted substrates. Mediates ubiquitination of TRIOBP and its subsequent proteasomal degradation, thus facilitating cell cycle progression by regulating the turn-over of TRIOBP. Also mediates ubiquitination of STX8. In Mus musculus (Mouse), this protein is E3 ubiquitin-protein ligase HECTD3 (Hectd3).